We begin with the raw amino-acid sequence, 473 residues long: Phosphatidylserine synthase 2 (473 aa).

The disordered stretch occupies residues 1–25 (MRRGERRVAGGSGSESPLLKGRRST). Residues 1-40 (MRRGERRVAGGSGSESPLLKGRRSTESEVYDDGTNTFFWR) are Cytoplasmic-facing. Residues S12, S14, and S16 each carry the phosphoserine modification. Residues 41–61 (AHTLTVLFILTCALGYVTLLE) traverse the membrane as a helical segment. Topologically, residues 62–74 (ETPQDTAYNTKRG) are lumenal. A helical membrane pass occupies residues 75 to 95 (IVASILVFLCFGVTQAKDGPF). The Cytoplasmic segment spans residues 96-104 (SRPHPAYWR). Residues 105 to 125 (FWLCVSVVYELFLIFILFQTV) traverse the membrane as a helical segment. Residues 126 to 291 (QDGRQFLKYV…EWKPASSLHR (166 aa)) lie on the Lumenal side of the membrane. N159 carries N-linked (GlcNAc...) asparagine glycosylation. Residues 292–312 (WLAVCGIILVFLLAELNTFYL) traverse the membrane as a helical segment. K313 is a topological domain (cytoplasmic). A helical membrane pass occupies residues 314–334 (FVLWMPPEHYLVLLRLVFFVN). Residues 335-354 (VGGVAMREIYDFMDELKPHR) lie on the Lumenal side of the membrane. A helical membrane pass occupies residues 355-375 (KLGQQAWLVAAITVTELLIVV). Topologically, residues 376–381 (KYDPHT) are cytoplasmic. The chain crosses the membrane as a helical span at residues 382 to 402 (LTLSLPFYISQCWTLGSILVL). Residues 403–473 (TWTVWRFFLR…TAEEGTSAAS (71 aa)) are Lumenal-facing. A disordered region spans residues 422 to 473 (RRQKQQSHQARAVNNRDGHPGPDDDLLGTGTAEEEGTTNDGVTAEEGTSAAS).

Belongs to the phosphatidyl serine synthase family. Highly expressed in testis. Detected at lower levels in kidney and heart.

It localises to the endoplasmic reticulum membrane. Its subcellular location is the membrane. The enzyme catalyses a 1,2-diacyl-sn-glycero-3-phosphoethanolamine + L-serine = a 1,2-diacyl-sn-glycero-3-phospho-L-serine + ethanolamine. It catalyses the reaction 1-hexadecanoyl-2-(9Z-octadecenoyl)-sn-glycero-3-phosphoethanolamine + L-serine = 1-hexadecanoyl-2-(9Z-octadecenoyl)-sn-glycero-3-phospho-L-serine + ethanolamine. The catalysed reaction is 1-hexadecanoyl-2-(4Z,7Z,10Z,13Z,16Z,19Z-docosahexaenoyl)-sn-glycero-3-phosphoethanolamine + L-serine = 1-hexadecanoyl-2-(4Z,7Z,10Z,13Z,16Z,19Z-docosahexaenoyl)-sn-glycero-3-phosphoserine + ethanolamine. It carries out the reaction 1-octadecanoyl-2-(5Z,8Z,11Z,14Z)-eicosatetraenoyl-sn-glycero-3-phosphoethanolamine + L-serine = 1-octadecanoyl-2-(5Z,8Z,11Z,14Z)-eicosatetraenoyl-sn-glycero-3-phosphoserine + ethanolamine. The enzyme catalyses 1-octadecanoyl-2-(4Z,7Z,10Z,13Z,16Z,19Z-docosahexaenoyl)-sn-glycero-3-phosphoethanolamine + L-serine = 1-octadecanoyl-2-(4Z,7Z,10Z,13Z,16Z,19Z-docosahexaenoyl)-sn-glycero-3-phosphoserine + ethanolamine. It catalyses the reaction 1-(1Z-octadecenyl)-2-(4Z,7Z,10Z,13Z,16Z,19Z-docosahexaenoyl)-sn-glycero-3-phosphoethanolamine + L-serine = 1-(1Z-octadecenyl)-2-(4Z,7Z,10Z,13Z,16Z,19Z-docosahexaenoyl)-sn-glycero-3-phospho-L-serine + ethanolamine. The catalysed reaction is 1-octadecanoyl-2-(9Z-octadecenoyl)-sn-glycero-3-phosphoethanolamine + L-serine = 1-octadecanoyl-2-(9Z-octadecenoyl)-sn-glycero-3-phospho-L-serine + ethanolamine. It carries out the reaction 1-(1Z-octadecenyl)-2-(9Z-octadecenoyl)-sn-glycero-3-phosphoethanolamine + L-serine = 1-(1Z-octadecenyl)-2-(9Z-octadecenoyl)-sn-glycero-3-phospho-L-serine + ethanolamine. The enzyme catalyses 1-(1Z-octadecenyl)-2-(5Z,8Z,11Z,14Z- eicosatetraenoyl)-sn-glycero-3-phosphoethanolamine + L-serine = 1-(1Z-octadecenyl)-2-(5Z,8Z,11Z,14Z-eicosatetraenoyl)-sn-glycero-3-phospho-L-serine + ethanolamine. Its pathway is phospholipid metabolism; phosphatidylserine biosynthesis. With respect to regulation, almost complete inhibition by ethanolamine in both the mitochondria-associated membrane (MAM) and endoplasmic reticulum (ER) per se. Its function is as follows. Catalyzes a base-exchange reaction in which the polar head group of phosphatidylethanolamine (PE) or phosphatidylcholine (PC) is replaced by L-serine. Catalyzes the conversion of phosphatatidylethanolamine and does not act on phosphatidylcholine. Can utilize both phosphatidylethanolamine (PE) plasmalogen and diacyl PE as substrate and the latter is six times better utilized, indicating the importance of an ester linkage at the sn-1 position. Although it shows no sn-1 fatty acyl preference, exhibits significant preference towards docosahexaenoic acid (22:6n-3) compared with 18:1 or 20:4 at the sn-2 position. The polypeptide is Phosphatidylserine synthase 2 (Ptdss2) (Mus musculus (Mouse)).